The sequence spans 259 residues: Short chain dehydrogenase ausX (259 aa).

NADP(+)-binding residues include Ile-13, Asp-59, Arg-121, Tyr-153, Lys-157, and Val-186. Residue Tyr-153 is the Proton acceptor of the active site. Catalysis depends on Tyr-153, which acts as the Proton donor. The Lowers pKa of active site Tyr role is filled by Lys-157.

This sequence belongs to the short-chain dehydrogenases/reductases (SDR) family.

The protein operates within secondary metabolite biosynthesis; terpenoid biosynthesis. In terms of biological role, short chain dehydrogenase; part of the gene cluster A that mediates the biosynthesis of the fungal meroterpenoid acetoxydehydroaustin. The first step of the pathway is the synthesis of 3,5-dimethylorsellinic acid by the polyketide synthase ausA. 3,5-dimethylorsellinic acid is then prenylated by the polyprenyl transferase ausN. Further epoxidation by the FAD-dependent monooxygenase ausM and cyclization by the probable terpene cyclase ausL lead to the formation of protoaustinoid A. Protoaustinoid A is then oxidized to spiro-lactone preaustinoid A3 by the combined action of the FAD-binding monooxygenases ausB and ausC, and the dioxygenase ausE. Acid-catalyzed keto-rearrangement and ring contraction of the tetraketide portion of preaustinoid A3 by ausJ lead to the formation of preaustinoid A4. The aldo-keto reductase ausK, with the help of ausH, is involved in the next step by transforming preaustinoid A4 into isoaustinone which is in turn hydroxylated by the P450 monooxygenase ausI to form austinolide. The cytochrome P450 monooxygenase ausG then modifies austinolide to austinol. Austinol is further acetylated to austin by the O-acetyltransferase ausP, which spontaneously changes to dehydroaustin. The cytochrome P450 monooxygenase then converts dehydroaustin is into 7-dehydrodehydroaustin. The hydroxylation catalyzed by ausR permits the second O-acetyltransferase ausQ to add an additional acetyl group to the molecule, leading to the formation of acetoxydehydroaustin. Due to genetic rearrangements of the clusters and the subsequent loss of some enzymes, the end product of the Penicillium brasilianum austinoid biosynthesis clusters is acetoxydehydroaustin. The chain is Short chain dehydrogenase ausX from Penicillium brasilianum.